Consider the following 62-residue polypeptide: Small ribosomal subunit protein uS14 (62 aa).

Residues Cys-25, Cys-28, Cys-41, and Cys-44 each coordinate Zn(2+).

Belongs to the universal ribosomal protein uS14 family. Zinc-binding uS14 subfamily. In terms of assembly, part of the 30S ribosomal subunit. Contacts proteins S3 and S10. Zn(2+) serves as cofactor.

Binds 16S rRNA, required for the assembly of 30S particles and may also be responsible for determining the conformation of the 16S rRNA at the A site. This chain is Small ribosomal subunit protein uS14, found in Sulfurihydrogenibium sp. (strain YO3AOP1).